An 82-amino-acid polypeptide reads, in one-letter code: Small ribosomal subunit protein uS17 (82 aa).

It belongs to the universal ribosomal protein uS17 family. In terms of assembly, part of the 30S ribosomal subunit.

Functionally, one of the primary rRNA binding proteins, it binds specifically to the 5'-end of 16S ribosomal RNA. In Nitrobacter hamburgensis (strain DSM 10229 / NCIMB 13809 / X14), this protein is Small ribosomal subunit protein uS17.